Here is a 445-residue protein sequence, read N- to C-terminus: Glycine--tRNA ligase (445 aa).

Lys-97 and Glu-145 together coordinate substrate. ATP-binding positions include 177 to 179 (RNE), 187 to 192 (FRTCEF), 262 to 263 (EI), and 308 to 311 (GLTR). 192–196 (FEQME) contacts substrate. Substrate is bound at residue 304–308 (ETSLG).

This sequence belongs to the class-II aminoacyl-tRNA synthetase family. Homodimer.

It is found in the cytoplasm. The catalysed reaction is tRNA(Gly) + glycine + ATP = glycyl-tRNA(Gly) + AMP + diphosphate. Functionally, catalyzes the attachment of glycine to tRNA(Gly). The protein is Glycine--tRNA ligase of Borrelia hermsii (strain HS1 / DAH).